The sequence spans 208 residues: NAD(P)H-quinone oxidoreductase subunit I (208 aa).

4Fe-4S ferredoxin-type domains lie at 55 to 84 (GRIH…VDWV) and 95 to 124 (RNYS…MTEE). Residues Cys64, Cys67, Cys70, Cys74, Cys104, Cys107, Cys110, and Cys114 each contribute to the [4Fe-4S] cluster site.

Belongs to the complex I 23 kDa subunit family. NDH-1 is composed of at least 11 different subunits. Requires [4Fe-4S] cluster as cofactor.

The protein localises to the cellular thylakoid membrane. It carries out the reaction a plastoquinone + NADH + (n+1) H(+)(in) = a plastoquinol + NAD(+) + n H(+)(out). The enzyme catalyses a plastoquinone + NADPH + (n+1) H(+)(in) = a plastoquinol + NADP(+) + n H(+)(out). In terms of biological role, NDH-1 shuttles electrons from an unknown electron donor, via FMN and iron-sulfur (Fe-S) centers, to quinones in the respiratory and/or the photosynthetic chain. The immediate electron acceptor for the enzyme in this species is believed to be plastoquinone. Couples the redox reaction to proton translocation, and thus conserves the redox energy in a proton gradient. The protein is NAD(P)H-quinone oxidoreductase subunit I of Prochlorococcus marinus (strain MIT 9515).